The primary structure comprises 316 residues: Porphobilinogen deaminase (316 aa).

Cysteine 240 is modified (S-(dipyrrolylmethanemethyl)cysteine).

The protein belongs to the HMBS family. In terms of assembly, monomer. Dipyrromethane is required as a cofactor.

The enzyme catalyses 4 porphobilinogen + H2O = hydroxymethylbilane + 4 NH4(+). Its pathway is porphyrin-containing compound metabolism; protoporphyrin-IX biosynthesis; coproporphyrinogen-III from 5-aminolevulinate: step 2/4. Tetrapolymerization of the monopyrrole PBG into the hydroxymethylbilane pre-uroporphyrinogen in several discrete steps. The sequence is that of Porphobilinogen deaminase from Alkaliphilus metalliredigens (strain QYMF).